Consider the following 807-residue polypeptide: Shutoff protein (807 aa).

The interval 1 to 88 (MESVEKKDSL…QVGRGDERHG (88 aa)) is disordered. The segment covering 16–29 (FATTASTDAANAPT) has biased composition (polar residues). 2 stretches are compositionally biased toward basic and acidic residues: residues 59–70 (RSVPTEDKKQDQ) and 79–88 (QVGRGDERHG). Residues 280–345 (VMSELIVRRA…AVLVTVELEC (66 aa)) are binding to host EIF4G. Residues 348–466 (RFFADPEMQR…DLWTAFNERS (119 aa)) form the RRM domain. Tyr-365 and Tyr-682 each carry phosphotyrosine; by host. Positions 684–807 (DPQSGEELNP…AGTARSPTQP (124 aa)) are disordered. Over residues 726-743 (GRGGILGQSGRGGFGRGG) the composition is skewed to gly residues. Residues 744–755 (GGHDGRLGEPRR) show a composition bias toward basic and acidic residues. Over residues 756-765 (GSFRGRRGVR) the composition is skewed to basic residues.

It belongs to the adenoviridae shutoff protein family. In terms of assembly, monomer. Interacts with hexon protein; this interaction allows chaperoning and trimerization of hexon proteins. Interacts (via N-terminus) with host initiation factor EIF4G (via C-terminus). Interacts (via RRM domain) with viral mRNAs that contain the tripartite leader; this interaction allows ribosome shunting and expression of viral late mRNAs. Might be cleaved by the viral protease. Post-translationally, phosphorylated. Tyrosine phosphorylation enhances preferential binding to tripartite leader mRNAs and allows ribosome shunting. In terms of processing, methylated. Asymmetric dimethylation by host PRMT1 of the Arg/Gly-rich region may regulate shutoff protein binding to hexon and promote the capsid assembly in the nucleus.

Its subcellular location is the host cytoplasm. Its function is as follows. Protein that inhibits host translation while promoting late viral translation by ribosome shunting. Blocks host cap-dependent translation by binding to eIF4G, displacing MKNK1 from cap initiation complexes and preventing EIF4E phosphorylation. Binds to the tripartite leader sequence of viral late mRNAs and recruits host eIF4G, PABPC1/poly-A binding protein and 40S ribosomes subunits on viral mRNAs, allowing ribosome shunting and efficient translation of late viral mRNAs even though conventional translation via ribosome scanning from the cap has been shut off in the host cell. During assembly, acts as a chaperone protein that helps hexon proteins assembly into trimers. In Homo sapiens (Human), this protein is Shutoff protein.